Reading from the N-terminus, the 500-residue chain is Zinc finger protein PLAG1 (500 aa).

Residues 1-30 are disordered; that stretch reads MATVIPGDLSEVRDTQKVPSGKRKRGETKP. Residues 2–84 are interaction with KPNA2; the sequence is ATVIPGDLSE…SKYKLQRHMA (83 aa). The Nuclear localization signal signature appears at 22-25; that stretch reads KRKR. 7 C2H2-type zinc fingers span residues 34–56, 62–86, 92–114, 121–143, 150–172, 185–207, and 213–236; these read FPCQ…SYSH, YKCI…MATH, HKCN…LHTH, FKCE…LALH, LTCK…LKSH, HQCE…MVVH, and FLCQ…KKSH. The segment at 41–242 is decreased nuclear import with localization in the nucleus but also in the cytoplasm; it reads KAFNSVEKLK…KKSHNQELLK (202 aa). The repression domain; contains 3 sumoylation motifs and massively decrease transcription activity stretch occupies residues 243 to 384; the sequence is VKTEPVDFLD…QASSSSKLGL (142 aa). The activates transcription; Inhibition of nuclear import due to lack of NLS and KPNA2 interaction stretch occupies residues 243–500; sequence VKTEPVDFLD…TLPRFHQAFQ (258 aa). Residues Lys244 and Lys263 each participate in a glycyl lysine isopeptide (Lys-Gly) (interchain with G-Cter in SUMO) cross-link. Residues 365 to 388 form a disordered region; sequence GGVPSSSQDSQASSSSKLGLDPQI. Residues 369–380 are compositionally biased toward low complexity; the sequence is SSSQDSQASSSS. Residues 385–500 are massively activates transcription; the sequence is DPQIGSLDDG…TLPRFHQAFQ (116 aa).

Belongs to the krueppel C2H2-type zinc-finger protein family. As to quaternary structure, interacts with KPNA2, which escorts protein to the nucleus via interaction with nuclear localization signal. Interacts with E3 SUMO-protein ligase PIAS1, PIAS2 and PIAS4. Sumoylated with SUMO1; which inhibits transcriptional activity, but does not affect nuclear localization. Blockers of sumoylation pathway such as SENP3 and inactive UBE2I increases transcriptional capacity. Sumoylation is increased in the presence of PIAS1. In terms of processing, acetylated by lysine acetyltransferase EP300; which activates transcriptional capacity. Lysine residues that are sumoylated also seem to be target for acetylation. Expressed in fetal tissues such as lung, liver and kidney. Not detected or weak detection in normal adult tissues, but highly expressed in salivary gland with benign or malignant pleiomorphic adenomas with or without 8q12 aberrations, with preferential occurrence in benign tumors.

The protein resides in the nucleus. Transcription factor whose activation results in up-regulation of target genes, such as IGFII, leading to uncontrolled cell proliferation: when overexpressed in cultured cells, higher proliferation rate and transformation are observed. Other target genes such as CRLF1, CRABP2, CRIP2, PIGF are strongly induced in cells with PLAG1 induction. Proto-oncogene whose ectopic expression can trigger the development of pleomorphic adenomas of the salivary gland and lipoblastomas. Overexpression is associated with up-regulation of IGFII, is frequently observed in hepatoblastoma, common primary liver tumor in childhood. Cooperates with CBFB-MYH11, a fusion gene important for myeloid leukemia. This chain is Zinc finger protein PLAG1 (PLAG1), found in Homo sapiens (Human).